We begin with the raw amino-acid sequence, 304 residues long: MKKIKCALIGSGNIGTDLIYKIKRSPVLEPVWMVGIDPASEGLARARELGLKTTADGVDGLLPHVLEDGIQIAFDATSAYVHAENSRKLNELGVMMIDLTPAAIGPLCVPPVNLRQHADRVEMNVNMISCAGQATIPIVNAVSRVQGVEYAEIVASLASKSVGPGTRANLDEFTYTTSSAIEKVGGAKKGKALAIINPAEPPLIMRNTIYCLTESAPDQARITESILQMIGEVQKYVPGYRLVNGPSYDGNKVSVFMEVAGLGDYLPKYAGNLDIMTAAATRTAEMFAEEILAGKIKLKTAEVA.

11–14 (SGNI) lines the NAD(+) pocket. The Acyl-thioester intermediate role is filled by cysteine 130. NAD(+) contacts are provided by residues 161–169 (SVGPGTRAN) and asparagine 272.

It belongs to the acetaldehyde dehydrogenase family.

It catalyses the reaction acetaldehyde + NAD(+) + CoA = acetyl-CoA + NADH + H(+). This chain is Acetaldehyde dehydrogenase 1 (lapF), found in Azoarcus sp. (strain BH72).